The sequence spans 318 residues: Aquaporin-1 (318 aa).

The segment covering Met1 to Pro16 has biased composition (polar residues). Positions Met1–Gly27 are disordered. Residues Met1–Asn36 lie on the Cytoplasmic side of the membrane. A helical transmembrane segment spans residues Ala37 to Ile57. Residues Gly58 to Pro77 are Extracellular-facing. A helical transmembrane segment spans residues Phe78–Phe98. The Cytoplasmic segment spans residues Tyr99–Pro108. The short motif at Asn107 to Ala109 is the NPA 1 element. The chain crosses the membrane as a helical span at residues Ala109–Ile129. The Extracellular segment spans residues Pro130–Gln165. An N-linked (GlcNAc...) asparagine glycan is attached at Asn159. A helical transmembrane segment spans residues Gly166 to Val186. Residues Glu187–His193 are Cytoplasmic-facing. A helical transmembrane segment spans residues Leu194 to Thr214. Topologically, residues Gly215–Asp236 are extracellular. Residues Asn219–Ala221 carry the NPA 2 motif. Residues Trp237 to Phe257 traverse the membrane as a helical segment. Residues Lys258 to Val318 are Cytoplasmic-facing. Positions Gly268 to Val318 are disordered. A compositionally biased stretch (basic and acidic residues) spans His285 to Val305.

Belongs to the MIP/aquaporin (TC 1.A.8) family.

The protein localises to the nucleus membrane. It carries out the reaction H2O(in) = H2O(out). In terms of biological role, probable water channel involved in responses to changes in environmental conditions and conidiation. Involved in responses to hyperosmotic conditions, oxidative stress and cell wall destabilization. Also required for proper transcriptional activation of genes involved in aurofusarin biosynthesis. Not involved in pathogenicity, but negatively regulates deoxynivalenol (DON) production. This Gibberella zeae (strain ATCC MYA-4620 / CBS 123657 / FGSC 9075 / NRRL 31084 / PH-1) (Wheat head blight fungus) protein is Aquaporin-1.